The following is a 432-amino-acid chain: Phosphomethylpyrimidine synthase (432 aa).

Residues Asn-66, Met-95, Tyr-124, His-163, 185–187 (SRG), 226–229 (DGLR), and Glu-265 contribute to the substrate site. Position 269 (His-269) interacts with Zn(2+). Residue Tyr-292 participates in substrate binding. Zn(2+) is bound at residue His-333. Residues Cys-409, Cys-412, and Cys-416 each contribute to the [4Fe-4S] cluster site.

This sequence belongs to the ThiC family. [4Fe-4S] cluster is required as a cofactor.

The enzyme catalyses 5-amino-1-(5-phospho-beta-D-ribosyl)imidazole + S-adenosyl-L-methionine = 4-amino-2-methyl-5-(phosphooxymethyl)pyrimidine + CO + 5'-deoxyadenosine + formate + L-methionine + 3 H(+). The protein operates within cofactor biosynthesis; thiamine diphosphate biosynthesis. Functionally, catalyzes the synthesis of the hydroxymethylpyrimidine phosphate (HMP-P) moiety of thiamine from aminoimidazole ribotide (AIR) in a radical S-adenosyl-L-methionine (SAM)-dependent reaction. The polypeptide is Phosphomethylpyrimidine synthase (Thermoanaerobacter sp. (strain X514)).